The chain runs to 334 residues: Protein RecA (334 aa).

65–72 (GNESSGKT) provides a ligand contact to ATP.

The protein belongs to the RecA family.

The protein localises to the cytoplasm. Its function is as follows. Can catalyze the hydrolysis of ATP in the presence of single-stranded DNA, the ATP-dependent uptake of single-stranded DNA by duplex DNA, and the ATP-dependent hybridization of homologous single-stranded DNAs. It interacts with LexA causing its activation and leading to its autocatalytic cleavage. This is Protein RecA from Ureaplasma parvum serovar 3 (strain ATCC 27815 / 27 / NCTC 11736).